The chain runs to 270 residues: Elongation factor Ts (270 aa).

The involved in Mg(2+) ion dislocation from EF-Tu stretch occupies residues 75 to 78 (TDFV).

This sequence belongs to the EF-Ts family.

The protein resides in the cytoplasm. In terms of biological role, associates with the EF-Tu.GDP complex and induces the exchange of GDP to GTP. It remains bound to the aminoacyl-tRNA.EF-Tu.GTP complex up to the GTP hydrolysis stage on the ribosome. The sequence is that of Elongation factor Ts from Cutibacterium acnes (strain DSM 16379 / KPA171202) (Propionibacterium acnes).